Consider the following 71-residue polypeptide: Pro-glucagon (71 aa).

The protein belongs to the glucagon family.

It is found in the secreted. In terms of biological role, plays a key role in glucose metabolism and homeostasis. Regulates blood glucose by increasing gluconeogenesis and decreasing glycolysis. This is Pro-glucagon (gcg) from Ictalurus punctatus (Channel catfish).